Reading from the N-terminus, the 578-residue chain is Arginine--tRNA ligase (578 aa).

Positions 127-137 (PNLAKEMHVGH) match the 'HIGH' region motif.

Belongs to the class-I aminoacyl-tRNA synthetase family. Monomer.

It is found in the cytoplasm. The enzyme catalyses tRNA(Arg) + L-arginine + ATP = L-arginyl-tRNA(Arg) + AMP + diphosphate. The sequence is that of Arginine--tRNA ligase from Pseudomonas savastanoi pv. phaseolicola (strain 1448A / Race 6) (Pseudomonas syringae pv. phaseolicola (strain 1448A / Race 6)).